Reading from the N-terminus, the 319-residue chain is Cytochrome c biogenesis protein CcsA (319 aa).

The next 8 membrane-spanning stretches (helical) occupy residues 15–35, 44–64, 71–91, 96–116, 141–161, 223–243, 258–278, and 284–304; these read FSIVSIVITIHLITLVVNKIV, GMILTFSCITGLLVIRWIFAG, LYESLIFLSWSFYIIHMIPYF, LSAITAPGAIFTQGFATSGFF, MILAYAALLCGSLLSVALLVI, VISLGFLFLTMGILSGAVWAN, WAFITWTIFAIYLHIKTNINL, and AIVASIGFLIIWICYFGVNLL.

Belongs to the CcmF/CycK/Ccl1/NrfE/CcsA family. May interact with Ccs1.

The protein localises to the plastid. The protein resides in the chloroplast thylakoid membrane. Its function is as follows. Required during biogenesis of c-type cytochromes (cytochrome c6 and cytochrome f) at the step of heme attachment. The protein is Cytochrome c biogenesis protein CcsA of Fagopyrum esculentum subsp. ancestrale (Wild buckwheat).